The chain runs to 203 residues: CASP-like protein 2U5 (203 aa).

Over 1–31 the chain is Cytoplasmic; it reads MSEHRIPVAADKQISPPISAGEQKGCKGLKR. A helical membrane pass occupies residues 32 to 52; sequence TDLMLRFAAFVCCAVTMVVLI. The Extracellular segment spans residues 53-84; that stretch reads TDKQTSAIQVPGFNNLTITKTVSFDLAKAFVY. N-linked (GlcNAc...) asparagine glycosylation occurs at N67. Residues 85–105 traverse the membrane as a helical segment; the sequence is LVSAAGIGAGYTLLVLVLSII. Over 106-111 the chain is Cytoplasmic; the sequence is SAERSK. Residues 112–132 form a helical membrane-spanning segment; sequence AIAWFIFVFDQLITYVLLAAA. Over 133 to 164 the chain is Extracellular; sequence AASTEVAYMGAHAPPEASWLKVCSLFGRFCHQ. The chain crosses the membrane as a helical span at residues 165 to 185; that stretch reads LGASLVTSFISTVLFAFSAAI. At 186-203 the chain is on the cytoplasmic side; sequence SAYYLFSNTNVRPAYSKG.

Belongs to the Casparian strip membrane proteins (CASP) family. In terms of assembly, homodimer and heterodimers.

The protein resides in the cell membrane. This Selaginella moellendorffii (Spikemoss) protein is CASP-like protein 2U5.